A 401-amino-acid chain; its full sequence is MSDSAFSKDNRWLLPEGVDELLPPRAAQMETLRRQLLDQFGAWGYELVMPPFIEYLDSLLTGTGHDLDVQTFKLTDQLTGRLMGVRADITPQVARIDAHRLRREAPSRLCYIGSVLHARPEGISRSRNPVQVGAELFGHAGVESDIEIISLAVASLRTAGVAQPHLDLGHVGIFRGLARAAGCTPAQEGALLEALQRKAVAEIDELLDEAAIDPHLRRMLRALPQLNGGLEALDHAGEVLAEAPQGVRQALRTLWGVAAGLERRLPDLPLHFDLAELRGYGYHTGIVFAALVPGYGSEVARGGRYDDIGRVFGNPRPATGFSADLRTLVQVADGQPAVPAGKGVLAPWGDEPDLIKVIEALRAEGERVVQELPGQQGGAAAQGCDRRLQQDDGGGWVTRPL.

The interval 373–401 (PGQQGGAAAQGCDRRLQQDDGGGWVTRPL) is disordered. Gly residues predominate over residues 392-401 (DGGGWVTRPL).

Belongs to the class-II aminoacyl-tRNA synthetase family. HisZ subfamily. Heteromultimer composed of HisG and HisZ subunits.

Its subcellular location is the cytoplasm. It participates in amino-acid biosynthesis; L-histidine biosynthesis; L-histidine from 5-phospho-alpha-D-ribose 1-diphosphate: step 1/9. Functionally, required for the first step of histidine biosynthesis. May allow the feedback regulation of ATP phosphoribosyltransferase activity by histidine. This is ATP phosphoribosyltransferase regulatory subunit from Alkalilimnicola ehrlichii (strain ATCC BAA-1101 / DSM 17681 / MLHE-1).